The sequence spans 149 residues: UPF0756 membrane protein MS1439 (149 aa).

4 consecutive transmembrane segments (helical) span residues 10–32, 56–76, 82–102, and 126–146; these read IMLV…ISAL, VGII…KVQL, FLNW…WFAG, and VAFL…LAVI.

The protein belongs to the UPF0756 family.

The protein resides in the cell membrane. The chain is UPF0756 membrane protein MS1439 from Mannheimia succiniciproducens (strain KCTC 0769BP / MBEL55E).